The primary structure comprises 194 residues: Crossover junction endodeoxyribonuclease RuvC (194 aa).

Active-site residues include D7, E68, and D141. Mg(2+) is bound by residues D7, E68, and D141.

It belongs to the RuvC family. In terms of assembly, homodimer which binds Holliday junction (HJ) DNA. The HJ becomes 2-fold symmetrical on binding to RuvC with unstacked arms; it has a different conformation from HJ DNA in complex with RuvA. In the full resolvosome a probable DNA-RuvA(4)-RuvB(12)-RuvC(2) complex forms which resolves the HJ. Mg(2+) serves as cofactor.

It is found in the cytoplasm. The enzyme catalyses Endonucleolytic cleavage at a junction such as a reciprocal single-stranded crossover between two homologous DNA duplexes (Holliday junction).. Its function is as follows. The RuvA-RuvB-RuvC complex processes Holliday junction (HJ) DNA during genetic recombination and DNA repair. Endonuclease that resolves HJ intermediates. Cleaves cruciform DNA by making single-stranded nicks across the HJ at symmetrical positions within the homologous arms, yielding a 5'-phosphate and a 3'-hydroxyl group; requires a central core of homology in the junction. The consensus cleavage sequence is 5'-(A/T)TT(C/G)-3'. Cleavage occurs on the 3'-side of the TT dinucleotide at the point of strand exchange. HJ branch migration catalyzed by RuvA-RuvB allows RuvC to scan DNA until it finds its consensus sequence, where it cleaves and resolves the cruciform DNA. This is Crossover junction endodeoxyribonuclease RuvC from Bifidobacterium longum (strain DJO10A).